Reading from the N-terminus, the 836-residue chain is Taste receptor type 1 member 2 (836 aa).

A signal peptide spans 1-19 (MGPRAKAVCSLFILLQVLA). Over 20 to 565 (EPAENSDFYL…AFLEWHEPST (546 aa)) the chain is Extracellular. N-linked (GlcNAc...) asparagine glycans are attached at residues N84, N292, N312, N351, N427, N479, N486, N526, and N546. The helical transmembrane segment at 566-586 (IFVVMLTILGFLSTLAIMVIF) threads the bilayer. Residues 587–601 (WRHLHTPVVRSAGGP) are Cytoplasmic-facing. Residues 602–622 (MCFLMLVPLLLAYAMVPMYIG) form a helical membrane-spanning segment. The Extracellular segment spans residues 623–634 (QPTFFSCLWRQT). A helical transmembrane segment spans residues 635–655 (FFTLCFTICISCITVRSFQIV). Topologically, residues 656–680 (CIFKMARRLPRAYGYWVRCHGPYVF) are cytoplasmic. Residues 681 to 701 (VASFMVLKVVIVAGNVLATTA) traverse the membrane as a helical segment. At 702–724 (NPTARPDPDDPNIMVLSCNYRRA) the chain is on the extracellular side. Residues 725–745 (LLFNTSLDLLLSVAGFSFAYM) traverse the membrane as a helical segment. The Cytoplasmic portion of the chain corresponds to 746 to 757 (GKELPTNYNEAK). The helical transmembrane segment at 758-778 (FITLCMTFYFTSSVSLCTFMS) threads the bilayer. At 779 to 781 (VYD) the chain is on the extracellular side. Residues 782-802 (GVLVTILDLLITVLNLLGISF) traverse the membrane as a helical segment. At 803 to 836 (GYFGPKCYMVLFYPERNTQVYFSSMIQGYTMGKD) the chain is on the cytoplasmic side.

The protein belongs to the G-protein coupled receptor 3 family. TAS1R subfamily. Forms heterodimers with TAS1R3.

The protein resides in the cell membrane. Putative taste receptor. TAS1R2/TAS1R3 recognizes diverse natural and synthetic sweeteners. The chain is Taste receptor type 1 member 2 (TAS1R2) from Canis lupus familiaris (Dog).